Here is a 156-residue protein sequence, read N- to C-terminus: Small ribosomal subunit protein uS7 (156 aa).

The protein belongs to the universal ribosomal protein uS7 family. As to quaternary structure, part of the 30S ribosomal subunit. Contacts proteins S9 and S11.

Functionally, one of the primary rRNA binding proteins, it binds directly to 16S rRNA where it nucleates assembly of the head domain of the 30S subunit. Is located at the subunit interface close to the decoding center, probably blocks exit of the E-site tRNA. The chain is Small ribosomal subunit protein uS7 from Nitratiruptor sp. (strain SB155-2).